The following is a 167-amino-acid chain: Protein-export protein SecB (167 aa).

It belongs to the SecB family. Homotetramer, a dimer of dimers. One homotetramer interacts with 1 SecA dimer.

The protein localises to the cytoplasm. Functionally, one of the proteins required for the normal export of preproteins out of the cell cytoplasm. It is a molecular chaperone that binds to a subset of precursor proteins, maintaining them in a translocation-competent state. It also specifically binds to its receptor SecA. The sequence is that of Protein-export protein SecB from Wolbachia pipientis subsp. Culex pipiens (strain wPip).